The sequence spans 505 residues: Histidine ammonia-lyase (505 aa).

Positions 144–146 form a cross-link, 5-imidazolinone (Ala-Gly); it reads ASG. The residue at position 145 (Ser-145) is a 2,3-didehydroalanine (Ser).

This sequence belongs to the PAL/histidase family. Post-translationally, contains an active site 4-methylidene-imidazol-5-one (MIO), which is formed autocatalytically by cyclization and dehydration of residues Ala-Ser-Gly.

Its subcellular location is the cytoplasm. The catalysed reaction is L-histidine = trans-urocanate + NH4(+). Its pathway is amino-acid degradation; L-histidine degradation into L-glutamate; N-formimidoyl-L-glutamate from L-histidine: step 1/3. This Legionella pneumophila (strain Corby) protein is Histidine ammonia-lyase.